The chain runs to 779 residues: Probable ATP-dependent RNA helicase DHX40 (779 aa).

The disordered stretch occupies residues 1 to 28; it reads MSRFPAVAGRAPRRQEEGERSRDLQEER. The span at 13-28 shows a compositional bias: basic and acidic residues; that stretch reads RRQEEGERSRDLQEER. Positions 63–231 constitute a Helicase ATP-binding domain; it reads IQAVRDNSFL…FGNCPIFDIP (169 aa). An ATP-binding site is contributed by 76-83; the sequence is GNTGSGKT. A DEAH box motif is present at residues 173–176; sequence DEAH. The Helicase C-terminal domain occupies 263 to 442; it reads TMDIHLNEMA…SVVLTLKCLA (180 aa). The interval 737-779 is disordered; sequence SKDVLKKMQRRNDDKSISDARARFLERKQQRTQDHSDTRKETG.

The protein belongs to the DEAD box helicase family. DEAH subfamily. In terms of tissue distribution, ubiquitously expressed.

The catalysed reaction is ATP + H2O = ADP + phosphate + H(+). In terms of biological role, probable ATP-dependent RNA helicase. The protein is Probable ATP-dependent RNA helicase DHX40 (DHX40) of Homo sapiens (Human).